The primary structure comprises 182 residues: Crossover junction endodeoxyribonuclease RuvC (182 aa).

Active-site residues include Asp-7, Glu-67, and Asp-139. Mg(2+)-binding residues include Asp-7, Glu-67, and Asp-139.

This sequence belongs to the RuvC family. In terms of assembly, homodimer which binds Holliday junction (HJ) DNA. The HJ becomes 2-fold symmetrical on binding to RuvC with unstacked arms; it has a different conformation from HJ DNA in complex with RuvA. In the full resolvosome a probable DNA-RuvA(4)-RuvB(12)-RuvC(2) complex forms which resolves the HJ. Requires Mg(2+) as cofactor.

The protein resides in the cytoplasm. It carries out the reaction Endonucleolytic cleavage at a junction such as a reciprocal single-stranded crossover between two homologous DNA duplexes (Holliday junction).. Functionally, the RuvA-RuvB-RuvC complex processes Holliday junction (HJ) DNA during genetic recombination and DNA repair. Endonuclease that resolves HJ intermediates. Cleaves cruciform DNA by making single-stranded nicks across the HJ at symmetrical positions within the homologous arms, yielding a 5'-phosphate and a 3'-hydroxyl group; requires a central core of homology in the junction. The consensus cleavage sequence is 5'-(A/T)TT(C/G)-3'. Cleavage occurs on the 3'-side of the TT dinucleotide at the point of strand exchange. HJ branch migration catalyzed by RuvA-RuvB allows RuvC to scan DNA until it finds its consensus sequence, where it cleaves and resolves the cruciform DNA. The protein is Crossover junction endodeoxyribonuclease RuvC of Bordetella parapertussis (strain 12822 / ATCC BAA-587 / NCTC 13253).